The following is a 317-amino-acid chain: ATP synthase gamma chain (317 aa).

Belongs to the ATPase gamma chain family. F-type ATPases have 2 components, CF(1) - the catalytic core - and CF(0) - the membrane proton channel. CF(1) has five subunits: alpha(3), beta(3), gamma(1), delta(1), epsilon(1). CF(0) has three main subunits: a, b and c.

Its subcellular location is the cellular thylakoid membrane. Its function is as follows. Produces ATP from ADP in the presence of a proton gradient across the membrane. The gamma chain is believed to be important in regulating ATPase activity and the flow of protons through the CF(0) complex. The polypeptide is ATP synthase gamma chain (Synechococcus sp. (strain CC9311)).